The sequence spans 298 residues: Lipoyl synthase (298 aa).

Residues Cys-43, Cys-48, Cys-54, Cys-69, Cys-73, Cys-76, and Ser-280 each contribute to the [4Fe-4S] cluster site. In terms of domain architecture, Radical SAM core spans Phe-55–Pro-269.

This sequence belongs to the radical SAM superfamily. Lipoyl synthase family. It depends on [4Fe-4S] cluster as a cofactor.

It localises to the cytoplasm. It carries out the reaction [[Fe-S] cluster scaffold protein carrying a second [4Fe-4S](2+) cluster] + N(6)-octanoyl-L-lysyl-[protein] + 2 oxidized [2Fe-2S]-[ferredoxin] + 2 S-adenosyl-L-methionine + 4 H(+) = [[Fe-S] cluster scaffold protein] + N(6)-[(R)-dihydrolipoyl]-L-lysyl-[protein] + 4 Fe(3+) + 2 hydrogen sulfide + 2 5'-deoxyadenosine + 2 L-methionine + 2 reduced [2Fe-2S]-[ferredoxin]. The protein operates within protein modification; protein lipoylation via endogenous pathway; protein N(6)-(lipoyl)lysine from octanoyl-[acyl-carrier-protein]: step 2/2. Catalyzes the radical-mediated insertion of two sulfur atoms into the C-6 and C-8 positions of the octanoyl moiety bound to the lipoyl domains of lipoate-dependent enzymes, thereby converting the octanoylated domains into lipoylated derivatives. The sequence is that of Lipoyl synthase from Nitratidesulfovibrio vulgaris (strain DP4) (Desulfovibrio vulgaris).